The following is a 218-amino-acid chain: MAARSPSVVISDDEPGYDLNLFCIPNHYAEDLEKVFIPHGLIMDRTERLARDVMKEMGGHHIVALCVLKGGYKFFADLLDYIKALNRNSDKSIPMTVDFIRLKSYCNDQSTGDIKVIGGDDLSTLTGKNVLIVEDIIDTGKTMQTLLALVKKHKPKMVKVASLLMKRTPRSVGYKPDFVGFEIPDKFVVGYALDYNEYFRDLNHVCVISETGKAKYKA.

A2 bears the N-acetylalanine mark. A GMP-binding site is contributed by K69. K103 bears the N6-acetyllysine mark. A Glycyl lysine isopeptide (Lys-Gly) (interchain with G-Cter in SUMO1); alternate cross-link involves residue K115. K115 is covalently cross-linked (Glycyl lysine isopeptide (Lys-Gly) (interchain with G-Cter in SUMO2); alternate). GMP contacts are provided by residues 134–142 (EDIIDTGKT), K166, 186–188 (KFV), and D194. D138 functions as the Proton acceptor in the catalytic mechanism. T142 is modified (phosphothreonine). D194 serves as a coordination point for Mg(2+).

It belongs to the purine/pyrimidine phosphoribosyltransferase family. Homotetramer. It depends on Mg(2+) as a cofactor.

Its subcellular location is the cytoplasm. It carries out the reaction IMP + diphosphate = hypoxanthine + 5-phospho-alpha-D-ribose 1-diphosphate. It catalyses the reaction GMP + diphosphate = guanine + 5-phospho-alpha-D-ribose 1-diphosphate. It functions in the pathway purine metabolism; IMP biosynthesis via salvage pathway; IMP from hypoxanthine: step 1/1. In terms of biological role, converts guanine to guanosine monophosphate, and hypoxanthine to inosine monophosphate. Transfers the 5-phosphoribosyl group from 5-phosphoribosylpyrophosphate onto the purine. Plays a central role in the generation of purine nucleotides through the purine salvage pathway. The protein is Hypoxanthine-guanine phosphoribosyltransferase (HPRT1) of Bos taurus (Bovine).